A 288-amino-acid chain; its full sequence is ATP synthase gamma chain (288 aa).

The protein belongs to the ATPase gamma chain family. In terms of assembly, F-type ATPases have 2 components, CF(1) - the catalytic core - and CF(0) - the membrane proton channel. CF(1) has five subunits: alpha(3), beta(3), gamma(1), delta(1), epsilon(1). CF(0) has three main subunits: a, b and c.

The protein resides in the cell membrane. Produces ATP from ADP in the presence of a proton gradient across the membrane. The gamma chain is believed to be important in regulating ATPase activity and the flow of protons through the CF(0) complex. The sequence is that of ATP synthase gamma chain from Staphylococcus epidermidis (strain ATCC 35984 / DSM 28319 / BCRC 17069 / CCUG 31568 / BM 3577 / RP62A).